The primary structure comprises 299 residues: GTPase Era (299 aa).

The region spanning 4-171 (KSGFVAILGR…IKLLTDNLEE (168 aa)) is the Era-type G domain. Residues 12 to 19 (GRPNVGKS) form a G1 region. Position 12-19 (12-19 (GRPNVGKS)) interacts with GTP. The G2 stretch occupies residues 38-42 (QTTRN). Residues 59-62 (DTPG) are G3. Residues 59 to 63 (DTPGI) and 121 to 124 (NKID) contribute to the GTP site. The segment at 121–124 (NKID) is G4. Residues 150–152 (ISA) are G5. Residues 202 to 280 (TQQEVPHSVA…YLETWVKVKK (79 aa)) enclose the KH type-2 domain.

The protein belongs to the TRAFAC class TrmE-Era-EngA-EngB-Septin-like GTPase superfamily. Era GTPase family. As to quaternary structure, monomer.

Its subcellular location is the cytoplasm. It is found in the cell membrane. In terms of biological role, an essential GTPase that binds both GDP and GTP, with rapid nucleotide exchange. Plays a role in 16S rRNA processing and 30S ribosomal subunit biogenesis and possibly also in cell cycle regulation and energy metabolism. The polypeptide is GTPase Era (Streptococcus agalactiae serotype III (strain NEM316)).